We begin with the raw amino-acid sequence, 181 residues long: ATP-dependent protease subunit HslV (181 aa).

Residue Thr-11 is part of the active site. Na(+) is bound by residues Ala-166, Cys-169, and Thr-172.

Belongs to the peptidase T1B family. HslV subfamily. As to quaternary structure, a double ring-shaped homohexamer of HslV is capped on each side by a ring-shaped HslU homohexamer. The assembly of the HslU/HslV complex is dependent on binding of ATP.

The protein resides in the cytoplasm. It catalyses the reaction ATP-dependent cleavage of peptide bonds with broad specificity.. Allosterically activated by HslU binding. Protease subunit of a proteasome-like degradation complex believed to be a general protein degrading machinery. In Chlorobaculum tepidum (strain ATCC 49652 / DSM 12025 / NBRC 103806 / TLS) (Chlorobium tepidum), this protein is ATP-dependent protease subunit HslV.